We begin with the raw amino-acid sequence, 131 residues long: Large ribosomal subunit protein bL19 (131 aa).

This sequence belongs to the bacterial ribosomal protein bL19 family.

Functionally, this protein is located at the 30S-50S ribosomal subunit interface and may play a role in the structure and function of the aminoacyl-tRNA binding site. The protein is Large ribosomal subunit protein bL19 of Polynucleobacter necessarius subsp. necessarius (strain STIR1).